A 1501-amino-acid polypeptide reads, in one-letter code: Protein SNQ2 (1501 aa).

The segment covering 1-17 has biased composition (polar residues); sequence MSNIKSTQDSSHNAVAR. Residues 1-56 are disordered; it reads MSNIKSTQDSSHNAVARSSSASFAASEESFTGITHDKDEQSDTPADKLTKMLTGPA. Ser2 bears the N-acetylserine mark. Over residues 18–30 the composition is skewed to low complexity; the sequence is SSSASFAASEESF. Phosphoserine occurs at positions 26 and 29. A compositionally biased stretch (basic and acidic residues) spans 34-49; the sequence is THDKDEQSDTPADKLT. Phosphoserine is present on residues Ser64, Ser80, and Ser86. The 250-residue stretch at 161-410 folds into the ABC transporter 1 domain; it reads FKGIKAKRHQ…FAKMGYLCPP (250 aa). N-linked (GlcNAc...) asparagine glycans are attached at residues Asn273, Asn334, and Asn518. 5 helical membrane passes run 521–541, 554–574, 600–620, 628–648, and 664–680; these read YTVINVCSAIIQSFITGSLFY, GGVLYFALLYYSLMGLANISF, LASFPFRMIGLTCFFIILFFL, GSFFTIYLFLTMCSEAINGLF, and ISGILMMSISMYSTYMI. An N-linked (GlcNAc...) asparagine glycan is attached at Asn730. A helical membrane pass occupies residues 771–789; it reads FGILWCFLLGYVVLKVIFT. Residues 853–1095 form the ABC transporter 2 domain; the sequence is FIWKDVCFTI…ILNYFERNGA (243 aa). The N-linked (GlcNAc...) asparagine glycan is linked to Asn874. ATP is bound at residue 889-896; that stretch reads GESGAGKT. Thr1153 is subject to Phosphothreonine. Helical transmembrane passes span 1190–1212, 1216–1236, 1277–1296, and 1333–1352; these read IMSKMMLMLVGGLYIGFTFFNVG, VGLQNAMFAAFISIILSAPAM, HLFFSTIFFVSSYFPLRIFF, and ANVILGLCLSFMLSFCGVTQ. N-linked (GlcNAc...) asparagine glycosylation is present at Asn1401. Residues 1455–1475 traverse the membrane as a helical segment; it reads FGIFWIYIFFNIIAMVCVYYL.

Belongs to the ABC transporter superfamily. ABCG family. PDR (TC 3.A.1.205) subfamily.

It localises to the membrane. Its function is as follows. Could be an ATP-dependent permease. Confers hyper-resistance to the mutagens 4-nitroquinoline-N-oxide (4-NQO) and triaziquone, as well as to the chemicals sulphomethuron methyl phenanthroline when present in multiple copies. Exhibits nucleoside triphosphatase activity. The polypeptide is Protein SNQ2 (SNQ2) (Saccharomyces cerevisiae (strain ATCC 204508 / S288c) (Baker's yeast)).